Consider the following 664-residue polypeptide: MSDAVPQVGSQFGPYQLLRLLGRGGMGEVYEAEDTRKHRVVALKLISPQYSDNAVFRARMQREADTAGRLTEPHIVPIHDYGEINGQFFVEMRMIDGTSLRALLKQYGPLTPARAVAIVRQIAAALDAAHANGVTHRDVKPENILVTASDFAYLVDFGIARAASDPGLTQTGTAVGTYNYMAPERFTGDEVTYRADIYALACVLGECLTGAPPYRADSVERLIAAHLMDPAPQPSQLRPGRVPPALDQVIAKGMAKNPAERFMSAGDLAIAAHDALTTSEQHQATTILRRGDNATLLATPADTGLSQSESGIAGAGTGPPTPGAARWSPGDSATVAGPLAADSRGGNWPSQTGHSPAVPNALQASLGHAVPPAGNKRKVWAVVGAAAIVLVAIVAAAGYLVLRPSWSPTQASGQTVLPFTGIDFRLSPSGVAVDSAGNVYVTSEGMYGRVVKLATGSTGTTVLPFNGLYQPQGLAVDGAGTVYVTDFNNRVVTLAAGSNNQTVLPFDGLNYPEGLAVDTQGAVYVADRGNNRVVKLAAGSKTQTVLPFTGLNDPDGVAVDNSGNVYVTDTDNNRVVKLEAESNNQVVLPFTDITAPWGIAVDEAGTVYVTEHNTNQVVKLLAGSTTSTVLPFTGLNTPLAVAVDSDRTVYVADRGNDRVVKLTS.

Topologically, residues 1–381 (MSDAVPQVGS…PAGNKRKVWA (381 aa)) are cytoplasmic. The 262-residue stretch at 15 to 276 (YQLLRLLGRG…DLAIAAHDAL (262 aa)) folds into the Protein kinase domain. ATP-binding positions include 21 to 29 (LGRGGMGEV) and K44. T135 is modified (phosphothreonine; by autocatalysis). D138 (proton acceptor) is an active-site residue. 4 positions are modified to phosphothreonine; by autocatalysis: T169, T171, T173, and T209. A disordered region spans residues 303–333 (TGLSQSESGIAGAGTGPPTPGAARWSPGDSA). The chain crosses the membrane as a helical span at residues 382–402 (VVGAAAIVLVAIVAAAGYLVL). Topologically, residues 403–664 (RPSWSPTQAS…GNDRVVKLTS (262 aa)) are extracellular. NHL repeat units lie at residues 414 to 456 (QTVL…LATG), 457 to 497 (STGT…LAAG), 498 to 539 (SNNQ…LAAG), 540 to 581 (SKTQ…LEAE), 582 to 623 (SNNQ…LLAG), and 624 to 664 (STTS…KLTS).

It belongs to the protein kinase superfamily. Ser/Thr protein kinase family. In terms of assembly, homodimer. The extracellular domain interacts with host laminin. Autophosphorylated. Dephosphorylated by PstP.

The protein localises to the cell membrane. It carries out the reaction L-seryl-[protein] + ATP = O-phospho-L-seryl-[protein] + ADP + H(+). The catalysed reaction is L-threonyl-[protein] + ATP = O-phospho-L-threonyl-[protein] + ADP + H(+). Its activity is regulated as follows. Dimerization activates the kinase domain of unphosphorylated PknD via an allosteric mechanism, triggering autophosphorylation and phosphorylation of target proteins. Phosphorylated PknD is fully active even in the absence of dimerization. Part of a signaling pathway that enables adaptation to osmotic stress through cell wall remodeling and virulence factor production. In terms of biological role, key microbial factor required for central nervous system tuberculosis. Required for invasion of host brain endothelia, but not macrophages, lung epithelia or other endothelia. The sequence is that of Serine/threonine-protein kinase PknD (pknD) from Mycobacterium tuberculosis (strain CDC 1551 / Oshkosh).